Reading from the N-terminus, the 540-residue chain is Putative sel1-like repeat-containing protein R815 (540 aa).

Sel1-like repeat units follow at residues 129 to 164, 165 to 200, 201 to 236, 237 to 272, 273 to 308, and 309 to 344; these read IDAQ…YKEN, LFGL…KHNY, PAVK…NQGY, PLAQ…NNGC, LYAT…SENY, and LLAI…NSTK.

This Acanthamoeba polyphaga (Amoeba) protein is Putative sel1-like repeat-containing protein R815.